The sequence spans 283 residues: Release factor glutamine methyltransferase (283 aa).

S-adenosyl-L-methionine-binding positions include 120 to 124 (GTGSG), aspartate 143, phenylalanine 172, and asparagine 187. 187–190 (NPPY) is a binding site for substrate.

It belongs to the protein N5-glutamine methyltransferase family. PrmC subfamily.

It carries out the reaction L-glutaminyl-[peptide chain release factor] + S-adenosyl-L-methionine = N(5)-methyl-L-glutaminyl-[peptide chain release factor] + S-adenosyl-L-homocysteine + H(+). Methylates the class 1 translation termination release factors RF1/PrfA and RF2/PrfB on the glutamine residue of the universally conserved GGQ motif. This is Release factor glutamine methyltransferase from Moorella thermoacetica (strain ATCC 39073 / JCM 9320).